The sequence spans 365 residues: MDIIETAKLEGHLESQTNNSTNTYTSPTEAVEEEDKNGKGKPKTLSNGLRKGAKKYPDYIQISMPNDSRNKLPLEWWKTGIAFVYALFNLILTTVMITVVHERVPPKELSPPLPDKFFDYVDRVKWAFSVSEINGMVLVGLWLTQWLFLRYKSIVGRRFFFIMGTLYLYRCITMYVTTLPVPGMHFQCAPKLNGDSQAKIQRILRLLSGGGLSITGSHILCGDFLFSGHTVVLTLTYLFIKEYSPRHFWWYHLVCWLLSAAGIICILVAHEHYTVDVIIAYYITTRLFWWYHSMANEKNLKVSSQTNFLSRAWWFPIFYFFEKNVQGSIPCCFSWPLSWPPGCFKSSCKKYSRVQKIGEDNEKST.

A disordered region spans residues 9–50; sequence LEGHLESQTNNSTNTYTSPTEAVEEEDKNGKGKPKTLSNGLR. Low complexity predominate over residues 15–28; that stretch reads SQTNNSTNTYTSPT. The next 5 helical transmembrane spans lie at 80–100, 128–148, 159–179, 219–239, and 248–268; these read GIAFVYALFNLILTTVMITVV, FSVSEINGMVLVGLWLTQWLF, FFFIMGTLYLYRCITMYVTTL, ILCGDFLFSGHTVVLTLTYLF, and FWWYHLVCWLLSAAGIICILV. Residue His-229 is part of the active site. Residues His-272 and Asp-276 contribute to the active site. A helical membrane pass occupies residues 273 to 290; sequence YTVDVIIAYYITTRLFWW. Residues 291 to 365 are Cytoplasmic-facing; that stretch reads YHSMANEKNL…KIGEDNEKST (75 aa). S-palmitoyl cysteine attachment occurs at residues Cys-331, Cys-332, Cys-343, and Cys-348.

Belongs to the sphingomyelin synthase family. Post-translationally, palmitoylated on Cys-331, Cys-332, Cys-343 and Cys-348; which plays an important role in plasma membrane localization. In terms of tissue distribution, expression restricted to late round spermatids and elongating spermatids but not detected in late elongate spermatids and Sertoli cells (at protein level).

It localises to the cell membrane. Its subcellular location is the golgi apparatus membrane. The enzyme catalyses an N-acylsphing-4-enine + a 1,2-diacyl-sn-glycero-3-phosphocholine = a sphingomyelin + a 1,2-diacyl-sn-glycerol. It carries out the reaction an N-acylsphinganine + a 1,2-diacyl-sn-glycero-3-phosphocholine = an N-acylsphinganine-1-phosphocholine + a 1,2-diacyl-sn-glycerol. It catalyses the reaction an N-acyl-(4R)-4-hydroxysphinganine + a 1,2-diacyl-sn-glycero-3-phosphocholine = an N-acyl-(4R)-4-hydroxysphinganine-phosphocholine + a 1,2-diacyl-sn-glycerol. The catalysed reaction is an N-acylsphing-4-enine + a 1,2-diacyl-sn-glycero-3-phosphoethanolamine = an N-acylsphing-4-enine 1-phosphoethanolamine + a 1,2-diacyl-sn-glycerol. The enzyme catalyses an N-acylsphinganine + a 1,2-diacyl-sn-glycero-3-phosphoethanolamine = an N-acylsphinganine-1-phosphoethanolamine + a 1,2-diacyl-sn-glycerol. It carries out the reaction an N-acyl-(4R)-4-hydroxysphinganine + a 1,2-diacyl-sn-glycero-3-phosphoethanolamine = an N-acyl-(4R)-4-hydroxysphinganine-1-phosphoethanolamine + a 1,2-diacyl-sn-glycerol. It catalyses the reaction 1,2-dihexadecanoyl-sn-glycero-3-phosphocholine + an N-acylsphing-4-enine = 1,2-dihexadecanoyl-sn-glycerol + a sphingomyelin. The catalysed reaction is 1-(9Z-octadecenoyl)-2-acyl-sn-3-glycerol + a sphingomyelin = a 1-(9Z-octadecenoyl)-2-acyl-sn-glycero-3-phosphocholine + an N-acylsphing-4-enine. The enzyme catalyses N-hexadecanoylsphinganine + a 1,2-diacyl-sn-glycero-3-phosphocholine = N-hexadecanoyl-sphinganine-1-phosphocholine + a 1,2-diacyl-sn-glycerol. It carries out the reaction N-hexadecanoyl-(4R)-hydroxysphinganine + a 1,2-diacyl-sn-glycero-3-phosphocholine = N-hexadecanoyl-(4R)-hydroxysphinganine-phosphocholine + a 1,2-diacyl-sn-glycerol. It catalyses the reaction N-hexadecanoylsphinganine + a 1,2-diacyl-sn-glycero-3-phosphoethanolamine = N-hexadecanoyl-sphinganine-1-phosphoethanolamine + a 1,2-diacyl-sn-glycerol. The catalysed reaction is N-hexadecanoyl-(4R)-hydroxysphinganine + a 1,2-diacyl-sn-glycero-3-phosphoethanolamine = N-hexadecanoyl-(4R)-hydroxysphinganine-1-phosphoethanolamine + a 1,2-diacyl-sn-glycerol. Its pathway is sphingolipid metabolism. Functionally, sphingomyelin synthase that primarily contributes to sphingomyelin synthesis and homeostasis at the plasma membrane. Catalyzes the reversible transfer of phosphocholine moiety in sphingomyelin biosynthesis: in the forward reaction transfers phosphocholine head group of phosphatidylcholine (PC) on to ceramide (CER) to form ceramide phosphocholine (sphingomyelin, SM) and diacylglycerol (DAG) as by-product, and in the reverse reaction transfers phosphocholine from SM to DAG to form PC and CER. The direction of the reaction appears to depend on the levels of CER and DAG in the plasma membrane. Does not use free phosphorylcholine or CDP-choline as donors. Can also transfer phosphoethanolamine head group of phosphatidylethanolamine (PE) on to ceramide (CER) to form ceramide phosphoethanolamine (CPE). Regulates receptor-mediated signal transduction via mitogenic DAG and proapoptotic CER, as well as via SM, a structural component of membrane rafts that serve as platforms for signal transduction and protein sorting. To a lesser extent, plays a role in secretory transport via regulation of DAG pool at the Golgi apparatus and its downstream effects on PRKD1. Required for normal bone matrix mineralization. The protein is Phosphatidylcholine:ceramide cholinephosphotransferase 2 (Sgms2) of Rattus norvegicus (Rat).